The primary structure comprises 156 residues: ATP synthase subunit b', chloroplastic (156 aa).

Residues 24–44 (ATLPLVAIQFILLMVLLNILL) form a helical membrane-spanning segment.

The protein belongs to the ATPase B chain family. F-type ATPases have 2 components, F(1) - the catalytic core - and F(0) - the membrane proton channel. F(1) has five subunits: alpha(3), beta(3), gamma(1), delta(1), epsilon(1). F(0) has four main subunits: a(1), b(1), b'(1) and c(10-14). The alpha and beta chains form an alternating ring which encloses part of the gamma chain. F(1) is attached to F(0) by a central stalk formed by the gamma and epsilon chains, while a peripheral stalk is formed by the delta, b and b' chains.

The protein localises to the plastid. The protein resides in the chloroplast thylakoid membrane. In terms of biological role, f(1)F(0) ATP synthase produces ATP from ADP in the presence of a proton or sodium gradient. F-type ATPases consist of two structural domains, F(1) containing the extramembraneous catalytic core and F(0) containing the membrane proton channel, linked together by a central stalk and a peripheral stalk. During catalysis, ATP synthesis in the catalytic domain of F(1) is coupled via a rotary mechanism of the central stalk subunits to proton translocation. Component of the F(0) channel, it forms part of the peripheral stalk, linking F(1) to F(0). The b'-subunit is a diverged and duplicated form of b found in plants and photosynthetic bacteria. The sequence is that of ATP synthase subunit b', chloroplastic from Phaeodactylum tricornutum (strain CCAP 1055/1).